The primary structure comprises 585 residues: MSLFQVYARALQYLAVHKFRVGAIVIANIVLAAITIAEPILFGRIIDAISSQKDVAPMLLLWAGFGVFNTIAFVLVSREADRLAHGRRASLLTEAFGRIVSMPLSWHSQRGTSNALHTLLRACETLFGLWLEFMRQHLATAVALMLLIPTAFAMDVRLSLILVVLGAAYVMISKVVMSRTKEGQAAVEGHYHTVFSHVSDSISNVSVVHSYNRIEAETRELKKFTQRLLSAQYPVLDWWALASGLNRIASTISMMAILVIGTVLVQRGELGVGEVIAFIGFANLLIGRLDQMKAFATQIFEARAKLEDFFQLEDSVQDREEPADAGELKGVVGEVEFRDISFDFANSAQGVRNVSFKAKAGQTIAIVGPTGAGKTTLVNLLQRVHEPKHGQILIDGVDIATVTRKSLRRSIATVFQDAGLMNRSIGENIRLGREDASLDEVMAAAEAAAASDFIEDRLNGYDTVVGERGNRLSGGERQRVAIARAILKNAPILVLDEATSALDVETEARVKDAIDALRKDRTTFIIAHRLSTVREADLVIFMDQGRVVEMGGFHELSQSNGRFAALLRASGILTDEDVRKSLTAA.

The ABC transmembrane type-1 domain maps to 21-301; that stretch reads VGAIVIANIV…MKAFATQIFE (281 aa). 6 consecutive transmembrane segments (helical) span residues 22–42, 55–75, 136–156, 158–178, 245–265, and 269–289; these read GAIV…PILF, VAPM…AFVL, QHLA…AMDV, LSLI…VVMS, LNRI…TVLV, and ELGV…IGRL. The 235-residue stretch at 335 to 569 folds into the ABC transporter domain; that stretch reads VEFRDISFDF…NGRFAALLRA (235 aa). 368–375 is an ATP binding site; that stretch reads GPTGAGKT.

Belongs to the ABC transporter superfamily. Beta-(1--&gt;2)glucan exporter (TC 3.A.1.108.1) family. In terms of assembly, homodimer.

Its subcellular location is the cell inner membrane. The enzyme catalyses [(1-&gt;2)-beta-D-glucosyl](n)(in) + ATP + H2O = [(1-&gt;2)-beta-D-glucosyl](n)(out) + ADP + phosphate + H(+). Functionally, involved in beta-(1--&gt;2)glucan export which is required for nodulation of legume roots. May be involved in other classes of oligosaccharides export. Transmembrane domains (TMD) form a pore in the inner membrane and the ATP-binding domain (NBD) is responsible for energy generation. This Rhizobium meliloti (strain 1021) (Ensifer meliloti) protein is Beta-(1--&gt;2)glucan export ATP-binding/permease protein NdvA.